The chain runs to 466 residues: Ribulose bisphosphate carboxylase large chain (466 aa).

An N6,N6,N6-trimethyllysine modification is found at Lys5. Positions 114 and 164 each coordinate substrate. The Proton acceptor role is filled by Lys166. Residue Lys168 coordinates substrate. Residues Lys192, Asp194, and Glu195 each coordinate Mg(2+). The residue at position 192 (Lys192) is an N6-carboxylysine. His285 (proton acceptor) is an active-site residue. Arg286, His318, and Ser370 together coordinate substrate.

Belongs to the RuBisCO large chain family. Type I subfamily. Heterohexadecamer of 8 large chains and 8 small chains. It depends on Mg(2+) as a cofactor.

Its subcellular location is the plastid. It localises to the chloroplast. It carries out the reaction 2 (2R)-3-phosphoglycerate + 2 H(+) = D-ribulose 1,5-bisphosphate + CO2 + H2O. The catalysed reaction is D-ribulose 1,5-bisphosphate + O2 = 2-phosphoglycolate + (2R)-3-phosphoglycerate + 2 H(+). RuBisCO catalyzes two reactions: the carboxylation of D-ribulose 1,5-bisphosphate, the primary event in carbon dioxide fixation, as well as the oxidative fragmentation of the pentose substrate in the photorespiration process. Both reactions occur simultaneously and in competition at the same active site. The sequence is that of Ribulose bisphosphate carboxylase large chain from Drosera regia (King sundew).